The primary structure comprises 62 residues: Probable tautomerase RSc0807 (62 aa).

P2 serves as the catalytic Proton acceptor; via imino nitrogen.

It belongs to the 4-oxalocrotonate tautomerase family.

In Ralstonia nicotianae (strain ATCC BAA-1114 / GMI1000) (Ralstonia solanacearum), this protein is Probable tautomerase RSc0807.